A 633-amino-acid polypeptide reads, in one-letter code: Glutamyl-tRNA(Gln) amidotransferase subunit E (633 aa).

Belongs to the GatB/GatE family. GatE subfamily. In terms of assembly, heterodimer of GatD and GatE.

The enzyme catalyses L-glutamyl-tRNA(Gln) + L-glutamine + ATP + H2O = L-glutaminyl-tRNA(Gln) + L-glutamate + ADP + phosphate + H(+). Allows the formation of correctly charged Gln-tRNA(Gln) through the transamidation of misacylated Glu-tRNA(Gln) in organisms which lack glutaminyl-tRNA synthetase. The reaction takes place in the presence of glutamine and ATP through an activated gamma-phospho-Glu-tRNA(Gln). The GatDE system is specific for glutamate and does not act on aspartate. The sequence is that of Glutamyl-tRNA(Gln) amidotransferase subunit E from Methanosarcina acetivorans (strain ATCC 35395 / DSM 2834 / JCM 12185 / C2A).